We begin with the raw amino-acid sequence, 440 residues long: Protein scalloped (440 aa).

The segment at 32-65 (TEQQAVGPGTIPSPWTPVNAGPPGALGSADTNGS) is disordered. A DNA-binding region (TEA) is located at residues 86-162 (SADAEGVWSP…QVLARRKLRE (77 aa)).

The C-terminus of sd interacts with the C-terminal serine-rich protein domain of vg, to form a complex which acts as a selector for wing development. Interacts (via C-terminus) with yki (via N-terminus) and this interaction enhances its transcriptional activity. Subset of neuroblasts in the central nervous system and in the peripheral sense organs of the embryo. Expressed in the developing wing primordia initially along the D/V wing boundary, and by the late third larval instar, maximal expression is seen in cells at the D/V wing disk boundary. Less expression in cells located farther from this boundary. Also expressed in wing progenitor cells.

Its subcellular location is the nucleus. Transcription factor which plays a key role in the Hippo/SWH (Sav/Wts/Hpo) signaling pathway, a signaling pathway that plays a pivotal role in organ size control and tumor suppression by restricting proliferation and promoting apoptosis. The core of this pathway is composed of a kinase cascade wherein Hippo (Hpo), in complex with its regulatory protein Salvador (Sav), phosphorylates and activates Warts (Wts) in complex with its regulatory protein Mats, which in turn phosphorylates and inactivates the Yorkie (Yki) oncoprotein. The Hippo/SWH signaling pathway inhibits the activity of the transcriptional complex formed by Scalloped (sd) and Yki and the target genes of this pathway include cyclin-E (cycE), diap1 and bantam. Sd promotes nuclear localization of Yki. Involved in the regulation of cell-specific gene expression during development, particularly in the differentiation of the nervous system. When in combination with vestigial (vg) it acts as a transcriptional activation complex that regulates gene expression in the wing. Binding to vg switches the DNA target selectivity of sd. Required autonomously for cell proliferation and viability within the wing blade. Required for proper sensory organ precursor (SOP) differentiation at the wing margin; required for correct expression of sens. In Drosophila melanogaster (Fruit fly), this protein is Protein scalloped (sd).